A 274-amino-acid polypeptide reads, in one-letter code: 2,3,4,5-tetrahydropyridine-2,6-dicarboxylate N-succinyltransferase (274 aa).

Arg-104 and Asp-141 together coordinate substrate.

The protein belongs to the transferase hexapeptide repeat family. Homotrimer.

Its subcellular location is the cytoplasm. It catalyses the reaction (S)-2,3,4,5-tetrahydrodipicolinate + succinyl-CoA + H2O = (S)-2-succinylamino-6-oxoheptanedioate + CoA. It participates in amino-acid biosynthesis; L-lysine biosynthesis via DAP pathway; LL-2,6-diaminopimelate from (S)-tetrahydrodipicolinate (succinylase route): step 1/3. This is 2,3,4,5-tetrahydropyridine-2,6-dicarboxylate N-succinyltransferase from Edwardsiella ictaluri (strain 93-146).